We begin with the raw amino-acid sequence, 504 residues long: Fumitremorgin C monooxygenase (504 aa).

Residues 12 to 32 (LGVVGASLIVILGIILLFPLG) traverse the membrane as a helical segment. Cys-442 provides a ligand contact to heme.

This sequence belongs to the cytochrome P450 family. The cofactor is heme.

Its subcellular location is the membrane. It catalyses the reaction fumitremorgin C + 2 reduced [NADPH--hemoprotein reductase] + 2 O2 = 12alpha,13alpha-dihydroxyfumitremorgin C + 2 oxidized [NADPH--hemoprotein reductase] + 2 H2O + 2 H(+). It functions in the pathway mycotoxin biosynthesis. Functionally, cytochrome P450 monooxygenase; part of the gene cluster that mediates the biosynthesis of fumitremorgins, indole alkaloids that carry not only intriguing chemical structures, but also interesting biological and pharmacological activities. The biosynthesis of fumitremorgin-type alkaloids begins by condensation of the two amino acids L-tryptophan and L-proline to brevianamide F, catalyzed by the non-ribosomal peptide synthetase ftmA. Brevianamide F is then prenylated by the prenyltransferase ftmPT1/ftmB in the presence of dimethylallyl diphosphate, resulting in the formation of tryprostatin B. The three cytochrome P450 monooxygenases, ftmP450-1/ftmC, ftmP450-2/ftmE and ftmP450-3/FtmG, are responsible for the conversion of tryprostatin B to 6-hydroxytryprostatin B, tryprostatin A to fumitremorgin C and fumitremorgin C to 12,13-dihydroxyfumitremorgin C, respectively. The putative methyltransferase ftmMT/ftmD is expected for the conversion of 6-hydroxytryprostatin B to tryprostatin A. FtmPT2/FtmH catalyzes the prenylation of 12,13-dihydroxyfumitre-morgin C in the presence of dimethylallyl diphosphate, resulting in the formation of fumitremorgin B. Fumitremorgin B is further converted to verruculogen by ftmOx1/ftmF via the insertion of an endoperoxide bond between the two prenyl moieties. In some fungal species, verruculogen is further converted to fumitremorgin A, but the enzymes involved in this step have not been identified yet. This chain is Fumitremorgin C monooxygenase, found in Aspergillus fumigatus (Neosartorya fumigata).